The chain runs to 98 residues: NADH-ubiquinone oxidoreductase chain 4L (98 aa).

A run of 3 helical transmembrane segments spans residues 1–21 (MSMV…GMLV), 29–49 (SLLC…VTIL), and 61–81 (IVLL…LVMV).

It belongs to the complex I subunit 4L family. As to quaternary structure, core subunit of respiratory chain NADH dehydrogenase (Complex I) which is composed of 45 different subunits.

The protein localises to the mitochondrion inner membrane. The catalysed reaction is a ubiquinone + NADH + 5 H(+)(in) = a ubiquinol + NAD(+) + 4 H(+)(out). Core subunit of the mitochondrial membrane respiratory chain NADH dehydrogenase (Complex I) which catalyzes electron transfer from NADH through the respiratory chain, using ubiquinone as an electron acceptor. Part of the enzyme membrane arm which is embedded in the lipid bilayer and involved in proton translocation. The protein is NADH-ubiquinone oxidoreductase chain 4L (MT-ND4L) of Canis latrans (Coyote).